The primary structure comprises 866 residues: Oxidation resistance protein 1 (866 aa).

The tract at residues 1-92 (MSVSNLSWLK…KKDGRRMSFQ (92 aa)) is disordered. The span at 63 to 88 (RKSELKRFYTIDTGQKKTLDKKDGRR) shows a compositional bias: basic and acidic residues. At Ser90 the chain carries Phosphoserine. The LysM domain maps to 98–141 (IEYTVESRDSLNSIALKFDTTPNELVQLNKLFSRAVVTGQVLYV). Thr118 is modified (phosphothreonine). The span at 150–168 (VESSPSLSPVSPLSPTSSE) shows a compositional bias: low complexity. Positions 150 to 202 (VESSPSLSPVSPLSPTSSEAEFDKTTTPDVAHPKEAPPASTVSGIRPARVVSS) are disordered. Residues 170–184 (EFDKTTTPDVAHPKE) show a composition bias toward basic and acidic residues. Phosphoserine is present on residues Ser201, Ser202, and Ser204. The region spanning 213 to 268 (KFLKINCKYITIGKGTVSGVLLVTPNNIMFDPHKTDPLVQENGCEEYGIMCPMEEV) is the GRAM domain. The tract at residues 293 to 540 (LSGRGSCHSK…AHGEGSSLLK (248 aa)) is disordered. Phosphoserine occurs at positions 294, 334, and 336. Phosphothreonine is present on Thr341. At Ser346 the chain carries Phosphoserine. The span at 347–363 (PIREELLSSEPRQEKSS) shows a compositional bias: basic and acidic residues. Over residues 364-399 (DASSESVQTVSQMEVQSLTATSEAANVPDRTSSNPG) the composition is skewed to polar residues. Over residues 433-447 (QSTEVKGQDNQDSSH) the composition is skewed to basic and acidic residues. Polar residues predominate over residues 448-465 (QESSLQQEAGEDSVSSGE). Residues 483–497 (ELKRDSETEVEELRK) are compositionally biased toward basic and acidic residues. Residue Ser488 is modified to Phosphoserine. Polar residues predominate over residues 502–519 (HSMQQAKQQRDTIQQVSQ). The segment at 543-570 (RRHRLHKFLCLRVGKPMRKTFVSQASAT) is mediates oxidative antimutator activity. The interval 682-703 (KQVAPAKADLEPESFRPNLSDP) is disordered. One can recognise a TLDc domain in the interval 705-866 (ELLLPDQIEK…IQDIEIWAFE (162 aa)).

Belongs to the OXR1 family. As to expression, highly expressed in brain and testis.

Its subcellular location is the mitochondrion. The protein localises to the nucleus. It is found in the nucleolus. In terms of biological role, may be involved in protection from oxidative damage. This Mus musculus (Mouse) protein is Oxidation resistance protein 1 (Oxr1).